A 365-amino-acid chain; its full sequence is Aminomethyltransferase (365 aa).

Belongs to the GcvT family. The glycine cleavage system is composed of four proteins: P, T, L and H.

The catalysed reaction is N(6)-[(R)-S(8)-aminomethyldihydrolipoyl]-L-lysyl-[protein] + (6S)-5,6,7,8-tetrahydrofolate = N(6)-[(R)-dihydrolipoyl]-L-lysyl-[protein] + (6R)-5,10-methylene-5,6,7,8-tetrahydrofolate + NH4(+). Its function is as follows. The glycine cleavage system catalyzes the degradation of glycine. The protein is Aminomethyltransferase of Desulfitobacterium hafniense (strain Y51).